The following is a 597-amino-acid chain: Medium/long-chain-fatty-acid--CoA ligase FadD6 (597 aa).

This sequence belongs to the ATP-dependent AMP-binding enzyme family.

It carries out the reaction a medium-chain fatty acid + ATP + CoA = a medium-chain fatty acyl-CoA + AMP + diphosphate. It catalyses the reaction a long-chain fatty acid + ATP + CoA = a long-chain fatty acyl-CoA + AMP + diphosphate. The catalysed reaction is hexanoate + ATP + CoA = hexanoyl-CoA + AMP + diphosphate. The enzyme catalyses octanoate + ATP + CoA = octanoyl-CoA + AMP + diphosphate. It carries out the reaction decanoate + ATP + CoA = decanoyl-CoA + AMP + diphosphate. It catalyses the reaction dodecanoate + ATP + CoA = dodecanoyl-CoA + AMP + diphosphate. The catalysed reaction is tetradecanoate + ATP + CoA = tetradecanoyl-CoA + AMP + diphosphate. The enzyme catalyses hexadecanoate + ATP + CoA = hexadecanoyl-CoA + AMP + diphosphate. It carries out the reaction octadecanoate + ATP + CoA = octadecanoyl-CoA + AMP + diphosphate. It catalyses the reaction 9-decenoate + ATP + CoA = 9-decenoyl-CoA + AMP + diphosphate. The catalysed reaction is (9Z)-octadecenoate + ATP + CoA = (9Z)-octadecenoyl-CoA + AMP + diphosphate. The enzyme catalyses 2-hydroxyhexadecanoate + ATP + CoA = 2-hydroxyhexadecanoyl-CoA + AMP + diphosphate. It carries out the reaction 3-hydroxytetradecanoate + ATP + CoA = 3-hydroxytetradecanoyl-CoA + AMP + diphosphate. It catalyses the reaction 12-hydroxyoctadecanoate + ATP + CoA = 12-hydroxyoctadecanoyl-CoA + AMP + diphosphate. The catalysed reaction is 15-hydroxypentadecanoate + ATP + CoA = 15-hydroxypentadecanoyl-CoA + AMP + diphosphate. The enzyme catalyses 16-hydroxyhexadecanoate + ATP + CoA = 16-hydroxyhexadecanoyl-CoA + AMP + diphosphate. It carries out the reaction 2-methylhexadecanoate + ATP + CoA = 2-methylhexadecanoyl-CoA + AMP + diphosphate. It catalyses the reaction 3-methylundecanoate + ATP + CoA = 3-methylundecanoyl-CoA + AMP + diphosphate. The catalysed reaction is 12-methyltridecanoate + ATP + CoA = 12-methyltridecanoyl-CoA + AMP + diphosphate. The enzyme catalyses 12-methyloctadecanoate + ATP + CoA = 12-methyloctadecanoyl-CoA + AMP + diphosphate. In terms of biological role, catalyzes the activation of medium/long-chain fatty acids as acyl-coenzyme A (acyl-CoA). May play a role in the uptake of fatty acids by trapping them metabolically as CoA esters. May also play an important role in the channeling of fatty acids into triacylglycerol (TAG) for use by Mycobacterium during its dormancy. The sequence is that of Medium/long-chain-fatty-acid--CoA ligase FadD6 from Mycobacterium tuberculosis (strain ATCC 25618 / H37Rv).